Here is a 532-residue protein sequence, read N- to C-terminus: Variant surface glycoprotein ILTAT 1.23 (532 aa).

A signal peptide spans 1-23 (MFKNINAAVLLLILSTRNDYANA). N66 carries N-linked (GlcNAc...) asparagine glycosylation. Disordered stretches follow at residues 79–107 (APKK…RNHA) and 408–504 (MQAG…DQDK). N419 carries an N-linked (GlcNAc...) asparagine glycan. A compositionally biased stretch (basic and acidic residues) spans 427-445 (CKWEEKDGKDGKCVADDSK). Low complexity predominate over residues 450–470 (GNAPAGAGDGTAGTTTTPNCA). Composition is skewed to basic and acidic residues over residues 472-484 (HTDK…ENKG) and 494-504 (KGKEGESDQDK). An N-linked (GlcNAc...) asparagine glycan is attached at N509. The GPI-anchor amidated asparagine moiety is linked to residue N509. The propeptide at 510-532 (GSFLAKKKFALSVVSAAFTALLF) is removed in mature form.

The protein resides in the cell membrane. Its function is as follows. VSG forms a coat on the surface of the parasite. The trypanosome evades the immune response of the host by expressing a series of antigenically distinct VSGs from an estimated 1000 VSG genes. This chain is Variant surface glycoprotein ILTAT 1.23, found in Trypanosoma brucei brucei.